Reading from the N-terminus, the 297-residue chain is Ribosomal RNA small subunit methyltransferase A (297 aa).

S-adenosyl-L-methionine-binding residues include Asn-31, Leu-33, Gly-58, Glu-79, Asp-104, and Asn-129.

Belongs to the class I-like SAM-binding methyltransferase superfamily. rRNA adenine N(6)-methyltransferase family. RsmA subfamily.

The protein localises to the cytoplasm. It carries out the reaction adenosine(1518)/adenosine(1519) in 16S rRNA + 4 S-adenosyl-L-methionine = N(6)-dimethyladenosine(1518)/N(6)-dimethyladenosine(1519) in 16S rRNA + 4 S-adenosyl-L-homocysteine + 4 H(+). In terms of biological role, specifically dimethylates two adjacent adenosines (A1518 and A1519) in the loop of a conserved hairpin near the 3'-end of 16S rRNA in the 30S particle. May play a critical role in biogenesis of 30S subunits. In Staphylococcus aureus (strain bovine RF122 / ET3-1), this protein is Ribosomal RNA small subunit methyltransferase A.